The following is a 510-amino-acid chain: NAD(P)H-quinone oxidoreductase subunit 2 A, chloroplastic (510 aa).

12 helical membrane-spanning segments follow: residues 24 to 44, 59 to 79, 99 to 119, 124 to 144, 149 to 169, 183 to 203, 229 to 249, 295 to 315, 323 to 343, 354 to 374, 395 to 415, and 418 to 438; these read LLLF…GLIL, WFYF…LFRW, IFQF…VEYI, MAIT…MFLC, LITL…LSGY, YLLM…WLYG, ISIA…PAPF, WHLL…LIAI, MLAY…IVGD, YMLF…SFGL, ALSL…AGFF, and LHLF…IGLL.

Belongs to the complex I subunit 2 family. In terms of assembly, NDH is composed of at least 16 different subunits, 5 of which are encoded in the nucleus.

Its subcellular location is the plastid. The protein resides in the chloroplast thylakoid membrane. It catalyses the reaction a plastoquinone + NADH + (n+1) H(+)(in) = a plastoquinol + NAD(+) + n H(+)(out). The enzyme catalyses a plastoquinone + NADPH + (n+1) H(+)(in) = a plastoquinol + NADP(+) + n H(+)(out). Its function is as follows. NDH shuttles electrons from NAD(P)H:plastoquinone, via FMN and iron-sulfur (Fe-S) centers, to quinones in the photosynthetic chain and possibly in a chloroplast respiratory chain. The immediate electron acceptor for the enzyme in this species is believed to be plastoquinone. Couples the redox reaction to proton translocation, and thus conserves the redox energy in a proton gradient. In Dioscorea elephantipes (Elephant's foot yam), this protein is NAD(P)H-quinone oxidoreductase subunit 2 A, chloroplastic.